The sequence spans 137 residues: Large ribosomal subunit protein uL16c (137 aa).

Belongs to the universal ribosomal protein uL16 family. In terms of assembly, part of the 50S ribosomal subunit.

It localises to the plastid. The polypeptide is Large ribosomal subunit protein uL16c (Cuscuta reflexa (Southern Asian dodder)).